Consider the following 547-residue polypeptide: Probable ABC transporter periplasmic-binding protein SapA (547 aa).

Positions 1–21 are cleaved as a signal peptide; that stretch reads MRQVLSSLLVIAGLVSGQAIA.

It belongs to the bacterial solute-binding protein 5 family.

Its subcellular location is the periplasm. Not part of a putrescine export system. Very similar to a S.typhimurium protein implicated in antimicrobial peptide resistance, but the SapBCDF operon in E.coli is implicated in putrescine export. This chain is Probable ABC transporter periplasmic-binding protein SapA (sapA), found in Escherichia coli (strain K12).